The sequence spans 216 residues: Transmembrane protein 163a (216 aa).

Residues 1–15 lie on the Cytoplasmic side of the membrane; sequence MRLKPHEAQSYRKKA. Residues 16-36 form a helical membrane-spanning segment; the sequence is LWVSWISIVVTLILAVAGFTV. Topologically, residues 37–43 are extracellular; that stretch reads SFMRHSA. The chain crosses the membrane as a helical span at residues 44–64; it reads SAFGFAFDATLDVLSSIIVLW. At 65-77 the chain is on the cytoplasmic side; the sequence is RYSNAAAVHSAHR. The helical transmembrane segment at 78–98 threads the bilayer; the sequence is EYIACVILGVIFILSSLCILG. Residues 99–114 lie on the Extracellular side of the membrane; the sequence is KAIHDLATKLLPEVDD. The helical transmembrane segment at 115–135 threads the bilayer; that stretch reads FLFSVSIVSGLMCVILAVAKF. The Cytoplasmic segment spans residues 136–144; the sequence is MLGRILTSR. A helical membrane pass occupies residues 145–165; that stretch reads ALITDGFNSMVGGIMGFSILI. The Extracellular segment spans residues 166–182; sequence SAEVFRHYPNVWYLDGT. The chain crosses the membrane as a helical span at residues 183 to 203; it reads IGILIGLVIQAYGVKLLVDMI. At 204–216 the chain is on the cytoplasmic side; that stretch reads PRVRQTRNYERFE.

It belongs to the TMEM163 family.

The protein resides in the cytoplasmic vesicle. It is found in the secretory vesicle. Its subcellular location is the synaptic vesicle membrane. The protein localises to the early endosome membrane. It localises to the late endosome membrane. The protein resides in the lysosome membrane. It is found in the cell membrane. It catalyses the reaction Zn(2+)(in) = Zn(2+)(out). Zinc ion transporter that mediates zinc efflux and plays a crucial role in intracellular zinc homeostasis. Binds the divalent cations Zn(2+), Ni(2+), and to a minor extent Cu(2+). Is a functional modulator of P2X purinoceptors, including P2RX1, P2RX3, P2RX4 and P2RX7. Plays a role in central nervous system development and is required for myelination, and survival and proliferation of oligodendrocytes. The sequence is that of Transmembrane protein 163a from Danio rerio (Zebrafish).